The chain runs to 167 residues: Anaerobic nitrite reductase NSHB4 (167 aa).

The region spanning 12-162 is the Globin domain; that stretch reads RFTEEQEALV…LVAAIKEGMK (151 aa). Positions 45–49 match the Homodimerization motif; sequence EVAPS. Heme b contacts are provided by Ser55, His73, Arg103, Thr107, and His108. Residues 115–127 carry the Homodimerization motif; sequence DTHFEVARFALLE.

Belongs to the plant globin family. As to quaternary structure, homodimer. Requires heme b as cofactor.

It localises to the cytoplasm. The protein localises to the nucleus. The enzyme catalyses Fe(III)-heme b-[protein] + nitric oxide + H2O = Fe(II)-heme b-[protein] + nitrite + 2 H(+). In terms of biological role, phytoglobin that reduces nitrite to nitric oxide under anoxic conditions (e.g. during flooding or in waterlogged soil). May not function as an oxygen storage or transport protein. Has an unusually high affinity for O(2) through an hexacoordinate heme iron because of a very low dissociation constant. The protein is Anaerobic nitrite reductase NSHB4 of Oryza sativa subsp. indica (Rice).